The primary structure comprises 111 residues: Nucleoid-associated protein CT0805 (111 aa).

It belongs to the YbaB/EbfC family. As to quaternary structure, homodimer.

It is found in the cytoplasm. It localises to the nucleoid. Binds to DNA and alters its conformation. May be involved in regulation of gene expression, nucleoid organization and DNA protection. The polypeptide is Nucleoid-associated protein CT0805 (Chlorobaculum tepidum (strain ATCC 49652 / DSM 12025 / NBRC 103806 / TLS) (Chlorobium tepidum)).